The primary structure comprises 503 residues: Potassium voltage-gated channel subfamily V member 1 (503 aa).

Disordered regions lie at residues 1 to 20 (MDLSPRNRPLLDSSSLDSGS) and 171 to 192 (KKDTDDQESQHESEQDFSQGPC). The Cytoplasmic portion of the chain corresponds to 3–213 (LSPRNRPLLD…EKPGSSTAAR (211 aa)). Over residues 10–20 (LLDSSSLDSGS) the composition is skewed to low complexity. Positions 171–184 (KKDTDDQESQHESE) are enriched in basic and acidic residues. A helical membrane pass occupies residues 214-234 (IFGVISIIFVAVSIVNMALMS). Over 235-241 (AELSWLN) the chain is Extracellular. The helical transmembrane segment at 242–262 (LQLLEILEYVCISWFTGEFIL) threads the bilayer. At 263-279 (RFLCVKDRCHFLRKVPN) the chain is on the cytoplasmic side. Residues 280–300 (IIDLLAILPFYITLLVESLSG) form a helical membrane-spanning segment. Over 301 to 312 (SHTTQELENVGR) the chain is Extracellular. A helical; Voltage-sensor membrane pass occupies residues 313-334 (LVQVLRLLRALRMLKLGRHSTG). Residues 335–348 (LRSLGMTITQCYEE) lie on the Cytoplasmic side of the membrane. A helical transmembrane segment spans residues 349-369 (VGLLLLFLSVGISIFSTIEYF). Positions 395 to 400 (TVGYGD) match the Selectivity filter motif. A helical membrane pass occupies residues 410–430 (IVAFMCILSGILVLALPIAII). Residues 431–503 (NDRFSACYFT…RSSGGDDFWF (73 aa)) are Cytoplasmic-facing.

This sequence belongs to the potassium channel family. V (TC 1.A.1.2) subfamily. Kv8.1/KCNV1 sub-subfamily. As to quaternary structure, heteromultimer with KCNB1 and KCNB2. Interacts with KCNC4 and KCND1. In terms of tissue distribution, detected in brain, in neocortex, olfactory tubercle, hippocampus, dentate gyrus, piriform cortex and amygdala. Detected in Purkinje cells and granular cells of the cerebellum, in hippocampal CA4 neurons and neocortex pyramidal cells.

The protein resides in the cell membrane. In terms of biological role, potassium channel subunit that does not form functional channels by itself. Modulates KCNB1 and KCNB2 channel activity by shifting the threshold for inactivation to more negative values and by slowing the rate of inactivation. Can down-regulate the channel activity of KCNB1, KCNB2, KCNC4 and KCND1, possibly by trapping them in intracellular membranes. This is Potassium voltage-gated channel subfamily V member 1 (Kcnv1) from Rattus norvegicus (Rat).